We begin with the raw amino-acid sequence, 550 residues long: Chaperonin GroEL 2 (550 aa).

ATP-binding positions include 30–33, K51, 87–91, G415, 480–482, and D496; these read TLGP, DGTTT, and NAA.

The protein belongs to the chaperonin (HSP60) family. In terms of assembly, forms a cylinder of 14 subunits composed of two heptameric rings stacked back-to-back. Interacts with the co-chaperonin GroES.

It is found in the cytoplasm. It carries out the reaction ATP + H2O + a folded polypeptide = ADP + phosphate + an unfolded polypeptide.. Together with its co-chaperonin GroES, plays an essential role in assisting protein folding. The GroEL-GroES system forms a nano-cage that allows encapsulation of the non-native substrate proteins and provides a physical environment optimized to promote and accelerate protein folding. This Erythrobacter litoralis (strain HTCC2594) protein is Chaperonin GroEL 2.